A 591-amino-acid polypeptide reads, in one-letter code: N-acetylgalactosaminyltransferase 7 (591 aa).

Residues 1 to 11 (MRVSTIRSGRI) lie on the Cytoplasmic side of the membrane. The chain crosses the membrane as a helical; Signal-anchor for type II membrane protein span at residues 12–29 (CRLALCLLVLLPLLYLLA). An N-linked (GlcNAc...) asparagine glycan is attached at Asn30. The Lumenal portion of the chain corresponds to 30 to 591 (NWSDHHKRVQ…WWFKEIRPRW (562 aa)). Residues 68-100 (DGLGNFEPKDVKPRSGPGENGEAHSLSPDKKHM) are disordered. 5 disulfides stabilise this stretch: Cys132-Cys367, Cys358-Cys441, Cys479-Cys496, Cys519-Cys532, and Cys558-Cys573. The catalytic subdomain A stretch occupies residues 141 to 251 (LPRTSVIIVF…TNWLPPLLAP (111 aa)). Positions 182 and 212 each coordinate substrate. Asp235 and His237 together coordinate Mn(2+). The interval 313–375 (PYRSPTHAGG…PCSRVGHVYR (63 aa)) is catalytic subdomain B. A substrate-binding site is contributed by Trp344. His372 contacts Mn(2+). Residues Arg375 and Tyr380 each coordinate substrate. The Ricin B-type lectin domain maps to 466–585 (LHWGELRSVA…NDSYQQWWFK (120 aa)). A glycan (N-linked (GlcNAc...) asparagine) is linked at Asn576.

The protein belongs to the glycosyltransferase 2 family. GalNAc-T subfamily. Requires Mn(2+) as cofactor. In terms of tissue distribution, expressed in developing oocytes and egg chambers. During embryonic stages 9-11, expressed in the primordium of the foregut, midgut and hindgut. Expressed in the salivary glands from embryonic stage 12 onwards. During embryonic stages 12-13, expressed in the posterior midgut and hindgut. During embryonic stages 14-15, expression continues in the hindgut. During embryonic stages 16-17, expressed in the antennomaxillary complex. In third instar larvae, ubiquitously expressed in wing, with increased expression in the notum and ventral wing pouch, eye-antennal, leg and haltere imaginal disks.

Its subcellular location is the golgi apparatus membrane. The catalysed reaction is L-seryl-[protein] + UDP-N-acetyl-alpha-D-galactosamine = a 3-O-[N-acetyl-alpha-D-galactosaminyl]-L-seryl-[protein] + UDP + H(+). It carries out the reaction L-threonyl-[protein] + UDP-N-acetyl-alpha-D-galactosamine = a 3-O-[N-acetyl-alpha-D-galactosaminyl]-L-threonyl-[protein] + UDP + H(+). Its pathway is protein modification; protein glycosylation. Glycopeptide transferase involved in O-linked oligosaccharide biosynthesis, which catalyzes the transfer of an N-acetyl-D-galactosamine residue to an already glycosylated peptide. In contrast to other proteins of the family, it does not act as a peptide transferase that transfers GalNAc onto serine or threonine residue on the protein receptor, but instead requires the prior addition of a GalNAc on a peptide before adding additional GalNAc moieties. Some peptide transferase activity is however not excluded, considering that its appropriate peptide substrate may remain unidentified. Prefers the monoglycosylated Muc5AC-3 as substrate. Might have a role in protein O-glycosylation in the Golgi and thereby in establishing and/or maintaining a proper secretory apparatus structure. This is N-acetylgalactosaminyltransferase 7 from Drosophila melanogaster (Fruit fly).